A 299-amino-acid chain; its full sequence is Phosphatidylcholine-sterol acyltransferase (299 aa).

2 N-linked (GlcNAc...) asparagine glycosylation sites follow: Asn28 and Asn184. The cysteines at positions 225 and 268 are disulfide-linked. Residue Asp257 is the Charge relay system of the active site. Asn285 is a glycosylation site (N-linked (GlcNAc...) asparagine). His289 functions as the Charge relay system in the catalytic mechanism. Residue Asn296 is glycosylated (N-linked (GlcNAc...) asparagine).

This sequence belongs to the AB hydrolase superfamily. Lipase family.

The protein resides in the secreted. It carries out the reaction a sterol + a 1,2-diacyl-sn-glycero-3-phosphocholine = a sterol ester + a 1-acyl-sn-glycero-3-phosphocholine. With respect to regulation, APOA1 is the most potent activator in plasma. Also activated by APOE, APOC1 and APOA4. Central enzyme in the extracellular metabolism of plasma lipoproteins. Synthesized mainly in the liver and secreted into plasma where it converts cholesterol and phosphatidylcholines (lecithins) to cholesteryl esters and lysophosphatidylcholines on the surface of high and low density lipoproteins (HDLs and LDLs). The cholesterol ester is then transported back to the liver. Has a preference for plasma 16:0-18:2 or 18:O-18:2 phosphatidylcholines. Also produced in the brain by primary astrocytes, and esterifies free cholesterol on nascent APOE-containing lipoproteins secreted from glia and influences cerebral spinal fluid (CSF) APOE- and APOA1 levels. Together with APOE and the cholesterol transporter ABCA1, plays a key role in the maturation of glial-derived, nascent lipoproteins. Required for remodeling high-density lipoprotein particles into their spherical forms. The chain is Phosphatidylcholine-sterol acyltransferase (LCAT) from Micromys minutus (European harvest mouse).